The following is a 476-amino-acid chain: Glycogen synthase (476 aa).

Lysine 15 is an ADP-alpha-D-glucose binding site.

Belongs to the glycosyltransferase 1 family. Bacterial/plant glycogen synthase subfamily.

It carries out the reaction [(1-&gt;4)-alpha-D-glucosyl](n) + ADP-alpha-D-glucose = [(1-&gt;4)-alpha-D-glucosyl](n+1) + ADP + H(+). Its pathway is glycan biosynthesis; glycogen biosynthesis. Functionally, synthesizes alpha-1,4-glucan chains using ADP-glucose. In Yersinia enterocolitica serotype O:8 / biotype 1B (strain NCTC 13174 / 8081), this protein is Glycogen synthase.